A 344-amino-acid chain; its full sequence is Arginine N-succinyltransferase (344 aa).

Residue Leu125 coordinates succinyl-CoA. The active-site Proton donor is the His229.

It belongs to the arginine N-succinyltransferase family.

It catalyses the reaction succinyl-CoA + L-arginine = N(2)-succinyl-L-arginine + CoA + H(+). It functions in the pathway amino-acid degradation; L-arginine degradation via AST pathway; L-glutamate and succinate from L-arginine: step 1/5. In terms of biological role, catalyzes the transfer of succinyl-CoA to arginine to produce N(2)-succinylarginine. In Salmonella agona (strain SL483), this protein is Arginine N-succinyltransferase.